The chain runs to 359 residues: Phospho-N-acetylmuramoyl-pentapeptide-transferase (359 aa).

The next 10 membrane-spanning stretches (helical) occupy residues 3 to 23 (QILF…PVLI), 53 to 73 (GGVA…LIGI), 84 to 104 (GLLV…DDFI), 117 to 137 (TAKL…ALQF), 156 to 176 (IATV…LVSA), 187 to 207 (LDGL…IITF), 231 to 251 (LALI…WNAA), 255 to 275 (IFMG…LSIT), 283 to 303 (VVIG…VAVF), and 330 to 350 (VIIR…ALFY).

The protein belongs to the glycosyltransferase 4 family. MraY subfamily. Mg(2+) serves as cofactor.

The protein localises to the cell membrane. The enzyme catalyses UDP-N-acetyl-alpha-D-muramoyl-L-alanyl-gamma-D-glutamyl-meso-2,6-diaminopimeloyl-D-alanyl-D-alanine + di-trans,octa-cis-undecaprenyl phosphate = di-trans,octa-cis-undecaprenyl diphospho-N-acetyl-alpha-D-muramoyl-L-alanyl-D-glutamyl-meso-2,6-diaminopimeloyl-D-alanyl-D-alanine + UMP. It functions in the pathway cell wall biogenesis; peptidoglycan biosynthesis. In terms of biological role, catalyzes the initial step of the lipid cycle reactions in the biosynthesis of the cell wall peptidoglycan: transfers peptidoglycan precursor phospho-MurNAc-pentapeptide from UDP-MurNAc-pentapeptide onto the lipid carrier undecaprenyl phosphate, yielding undecaprenyl-pyrophosphoryl-MurNAc-pentapeptide, known as lipid I. The protein is Phospho-N-acetylmuramoyl-pentapeptide-transferase of Rhodococcus opacus (strain B4).